Here is an 827-residue protein sequence, read N- to C-terminus: Penicillin-binding protein 1A (827 aa).

The Cytoplasmic segment spans residues 1–18 (MGKKKKKRKSSAFKIILN). A helical; Signal-anchor for type II membrane protein membrane pass occupies residues 19 to 39 (VFLSIFLVAGVAFGGIVFAMI). Residues 40 to 827 (KTAPPLNVQQ…QNHEDNKNKQ (788 aa)) are Extracellular-facing. The transglycosylase stretch occupies residues 57–229 (SILYDDKGQY…PSVYYPYSSA (173 aa)). The Proton donor; for transglycosylase activity role is filled by E96. The segment at 357 to 641 (ASAVIMDYHN…AARLWGDIMK (285 aa)) is transpeptidase. The Acyl-ester intermediate; for transpeptidase activity role is filled by S398. The interval 755–827 (GSLPPTEEKN…QNHEDNKNKQ (73 aa)) is disordered. Residues 760–790 (TEEKNNSNTRDKNKDKNKDKDKNKNKDKNPS) show a composition bias toward basic and acidic residues. Residues 791–817 (QDKPNNNNNNNNNDNNNNTKPPENDSN) are compositionally biased toward low complexity. The span at 818-827 (QNHEDNKNKQ) shows a compositional bias: basic and acidic residues.

This sequence in the N-terminal section; belongs to the glycosyltransferase 51 family. The protein in the C-terminal section; belongs to the transpeptidase family.

The protein resides in the cell membrane. It carries out the reaction [GlcNAc-(1-&gt;4)-Mur2Ac(oyl-L-Ala-gamma-D-Glu-L-Lys-D-Ala-D-Ala)](n)-di-trans,octa-cis-undecaprenyl diphosphate + beta-D-GlcNAc-(1-&gt;4)-Mur2Ac(oyl-L-Ala-gamma-D-Glu-L-Lys-D-Ala-D-Ala)-di-trans,octa-cis-undecaprenyl diphosphate = [GlcNAc-(1-&gt;4)-Mur2Ac(oyl-L-Ala-gamma-D-Glu-L-Lys-D-Ala-D-Ala)](n+1)-di-trans,octa-cis-undecaprenyl diphosphate + di-trans,octa-cis-undecaprenyl diphosphate + H(+). It catalyses the reaction Preferential cleavage: (Ac)2-L-Lys-D-Ala-|-D-Ala. Also transpeptidation of peptidyl-alanyl moieties that are N-acyl substituents of D-alanine.. The protein operates within cell wall biogenesis; peptidoglycan biosynthesis. Cell wall formation. Synthesis of cross-linked peptidoglycan from the lipid intermediates. The enzyme has a penicillin-insensitive transglycosylase N-terminal domain (formation of linear glycan strands) and a penicillin-sensitive transpeptidase C-terminal domain (cross-linking of the peptide subunits). The protein is Penicillin-binding protein 1A (pbpA) of Clostridium botulinum (strain Langeland / NCTC 10281 / Type F).